Consider the following 475-residue polypeptide: Ribulose bisphosphate carboxylase large chain (475 aa).

A propeptide spanning residues 1 to 2 is cleaved from the precursor; the sequence is MS. Pro-3 bears the N-acetylproline mark. Substrate contacts are provided by Asn-123 and Thr-173. The active-site Proton acceptor is the Lys-175. Lys-177 lines the substrate pocket. Residues Lys-201, Asp-203, and Glu-204 each coordinate Mg(2+). N6-carboxylysine is present on Lys-201. His-294 acts as the Proton acceptor in catalysis. Substrate-binding residues include Arg-295, His-327, and Ser-379.

It belongs to the RuBisCO large chain family. Type I subfamily. As to quaternary structure, heterohexadecamer of 8 large chains and 8 small chains; disulfide-linked. The disulfide link is formed within the large subunit homodimers. Mg(2+) serves as cofactor. The disulfide bond which can form in the large chain dimeric partners within the hexadecamer appears to be associated with oxidative stress and protein turnover.

It is found in the plastid. Its subcellular location is the chloroplast. It carries out the reaction 2 (2R)-3-phosphoglycerate + 2 H(+) = D-ribulose 1,5-bisphosphate + CO2 + H2O. It catalyses the reaction D-ribulose 1,5-bisphosphate + O2 = 2-phosphoglycolate + (2R)-3-phosphoglycerate + 2 H(+). Functionally, ruBisCO catalyzes two reactions: the carboxylation of D-ribulose 1,5-bisphosphate, the primary event in carbon dioxide fixation, as well as the oxidative fragmentation of the pentose substrate in the photorespiration process. Both reactions occur simultaneously and in competition at the same active site. The chain is Ribulose bisphosphate carboxylase large chain from Gnetum parvifolium (Small-leaved jointfir).